The sequence spans 124 residues: MKNVLIIFGKPYCSICENVSEAVEELKSEYDILHVDILSFFLKDGDSSMLGDVKRGTLIGNFAAHLSNYIVSIFKYNPQTKQMAFVDINKSLDFTKTDKSLVNLEILKSEIEKANYGVWPPVTE.

The cysteines at positions 13 and 16 are disulfide-linked.

The protein belongs to the glutaredoxin family. Homodimer.

Its subcellular location is the host cytoplasm. In terms of biological role, glutaredoxin necessary for virion morphogenesis and virus replication. Functions as a thiol-disulfide transfer protein between membrane-associated OPG128 and substrates OPG095 or OPG053. The complete pathway for formation of disulfide bonds in intracellular virion membrane proteins sequentially involves oxidation of OPG072, OPG128 and OPG088. Exhibit thioltransferase and dehydroascorbate reductase activities in vitro. The polypeptide is Glutaredoxin-2 (OPG088) (Camelus).